We begin with the raw amino-acid sequence, 156 residues long: 6,7-dimethyl-8-ribityllumazine synthase (156 aa).

Residues Phe23, 57-59 (AFE), and 81-83 (AVI) contribute to the 5-amino-6-(D-ribitylamino)uracil site. A (2S)-2-hydroxy-3-oxobutyl phosphate-binding site is contributed by 86-87 (ST). The Proton donor role is filled by His89. Phe114 lines the 5-amino-6-(D-ribitylamino)uracil pocket. Position 128 (Arg128) interacts with (2S)-2-hydroxy-3-oxobutyl phosphate.

This sequence belongs to the DMRL synthase family.

The catalysed reaction is (2S)-2-hydroxy-3-oxobutyl phosphate + 5-amino-6-(D-ribitylamino)uracil = 6,7-dimethyl-8-(1-D-ribityl)lumazine + phosphate + 2 H2O + H(+). The protein operates within cofactor biosynthesis; riboflavin biosynthesis; riboflavin from 2-hydroxy-3-oxobutyl phosphate and 5-amino-6-(D-ribitylamino)uracil: step 1/2. In terms of biological role, catalyzes the formation of 6,7-dimethyl-8-ribityllumazine by condensation of 5-amino-6-(D-ribitylamino)uracil with 3,4-dihydroxy-2-butanone 4-phosphate. This is the penultimate step in the biosynthesis of riboflavin. The protein is 6,7-dimethyl-8-ribityllumazine synthase of Campylobacter curvus (strain 525.92).